The primary structure comprises 400 residues: Phosphoglycerate kinase (400 aa).

Residues Asp-22–Asn-24, Arg-38, His-61–Arg-64, Arg-119, and Arg-152 each bind substrate. ATP contacts are provided by residues Lys-205, Gly-296, Glu-327, and Gly-353 to Thr-356.

This sequence belongs to the phosphoglycerate kinase family. As to quaternary structure, monomer.

It localises to the cytoplasm. It catalyses the reaction (2R)-3-phosphoglycerate + ATP = (2R)-3-phospho-glyceroyl phosphate + ADP. It participates in carbohydrate degradation; glycolysis; pyruvate from D-glyceraldehyde 3-phosphate: step 2/5. The sequence is that of Phosphoglycerate kinase from Campylobacter lari (strain RM2100 / D67 / ATCC BAA-1060).